The following is an 84-amino-acid chain: Antimicrobial peptide MeuNaTxbeta-2 (84 aa).

The N-terminal stretch at 1–20 is a signal peptide; sequence MMKTVIVLIVFSLVMIVVKS. Positions 21 to 83 constitute an LCN-type CS-alpha/beta domain; it reads DNGYLLDKYT…LWHYETNRCR (63 aa). 4 cysteine pairs are disulfide-bonded: Cys32–Cys82, Cys36–Cys57, Cys43–Cys64, and Cys47–Cys66.

In terms of tissue distribution, expressed by the venom gland.

Its subcellular location is the secreted. In terms of biological role, antimicrobial peptide with activity against both Gram-positive and -negative bacteria. This chain is Antimicrobial peptide MeuNaTxbeta-2, found in Mesobuthus eupeus (Lesser Asian scorpion).